Here is a 240-residue protein sequence, read N- to C-terminus: Probable transcriptional regulatory protein A2cp1_1765 (240 aa).

It belongs to the TACO1 family.

It is found in the cytoplasm. This is Probable transcriptional regulatory protein A2cp1_1765 from Anaeromyxobacter dehalogenans (strain 2CP-1 / ATCC BAA-258).